A 225-amino-acid chain; its full sequence is ATP synthase subunit a (225 aa).

A run of 5 helical transmembrane segments spans residues 16–36, 79–99, 105–125, 176–196, and 202–222; these read LFVY…VAKL, LVAT…IPGF, SLNL…FEGI, LFLL…AYAL, and VLQT…AVAI.

Belongs to the ATPase A chain family. As to quaternary structure, F-type ATPases have 2 components, CF(1) - the catalytic core - and CF(0) - the membrane proton channel. CF(1) has five subunits: alpha(3), beta(3), gamma(1), delta(1), epsilon(1). CF(0) has three main subunits: a(1), b(2) and c(9-12). The alpha and beta chains form an alternating ring which encloses part of the gamma chain. CF(1) is attached to CF(0) by a central stalk formed by the gamma and epsilon chains, while a peripheral stalk is formed by the delta and b chains.

It localises to the cell inner membrane. Key component of the proton channel; it plays a direct role in the translocation of protons across the membrane. The chain is ATP synthase subunit a from Campylobacter curvus (strain 525.92).